Reading from the N-terminus, the 173-residue chain is NADH-ubiquinone oxidoreductase chain 6 (173 aa).

A run of 5 helical transmembrane segments spans residues 1–21 (MTYL…AVAS), 27–47 (YGVV…LSLG), 48–68 (VSFV…VVFV), 88–108 (VGYG…GGLI), and 139–159 (YGVG…FVVL).

The protein belongs to the complex I subunit 6 family.

Its subcellular location is the mitochondrion membrane. It catalyses the reaction a ubiquinone + NADH + 5 H(+)(in) = a ubiquinol + NAD(+) + 4 H(+)(out). In terms of biological role, core subunit of the mitochondrial membrane respiratory chain NADH dehydrogenase (Complex I) that is believed to belong to the minimal assembly required for catalysis. Complex I functions in the transfer of electrons from NADH to the respiratory chain. The immediate electron acceptor for the enzyme is believed to be ubiquinone. The sequence is that of NADH-ubiquinone oxidoreductase chain 6 (MT-ND6) from Calidris maritima (Purple sandpiper).